Consider the following 73-residue polypeptide: UPF0154 protein LJ_1506 (73 aa).

The helical transmembrane segment at 3–23 (LGLAIFLIIIALLIGLVGGFY) threads the bilayer.

The protein belongs to the UPF0154 family.

It is found in the cell membrane. The chain is UPF0154 protein LJ_1506 from Lactobacillus johnsonii (strain CNCM I-12250 / La1 / NCC 533).